We begin with the raw amino-acid sequence, 141 residues long: MNTERTLVLIKPDGVRRGLIGEIISRFERKGLKIKALKMLRLTREKAEEFYSVHRGKPFFVSLIEFMTSGPIIAMILEGDMAISVVRRMIGPTDGREAPPGTIRGDYSLSKSQNVVHASDSPESAMREIRVIFKDDEIIDW.

ATP-binding residues include Lys-11, Phe-59, Arg-87, Thr-93, Arg-104, and Asn-114. His-117 acts as the Pros-phosphohistidine intermediate in catalysis.

The protein belongs to the NDK family. Requires Mg(2+) as cofactor.

It is found in the cytoplasm. It catalyses the reaction a 2'-deoxyribonucleoside 5'-diphosphate + ATP = a 2'-deoxyribonucleoside 5'-triphosphate + ADP. It carries out the reaction a ribonucleoside 5'-diphosphate + ATP = a ribonucleoside 5'-triphosphate + ADP. Major role in the synthesis of nucleoside triphosphates other than ATP. The ATP gamma phosphate is transferred to the NDP beta phosphate via a ping-pong mechanism, using a phosphorylated active-site intermediate. The polypeptide is Nucleoside diphosphate kinase (Staphylothermus marinus (strain ATCC 43588 / DSM 3639 / JCM 9404 / F1)).